The following is a 1034-amino-acid chain: Sodium bicarbonate cotransporter 3 (1034 aa).

2 disordered regions span residues 1–31 (MEAD…KTSS) and 53–99 (HVPF…SQRV). Residues 1–476 (MEADGAGEQM…DFKDALSLQC (476 aa)) lie on the Extracellular side of the membrane. Phosphoserine is present on residues Ser-57, Ser-60, Ser-89, and Ser-155. A compositionally biased stretch (basic residues) spans 60 to 77 (SRRRHKHRGHKHHHRRRK). Over residues 78 to 90 (DKDSDKEDGRESP) the composition is skewed to basic and acidic residues. Residue Asn-176 is glycosylated (N-linked (GlcNAc...) asparagine). A phosphoserine mark is found at Ser-238, Ser-250, Ser-260, Met-263, Ser-268, and Ser-271. Residues 250–260 (SAPGNLDNSKS) show a composition bias toward polar residues. The segment at 250–276 (SAPGNLDNSKSGEMKGNGSGGSRENST) is disordered. Asn-274 carries N-linked (GlcNAc...) asparagine glycosylation. Phosphoserine is present on residues Ser-275 and Ser-424. Residues 477–497 (LASILFLYCACMSPVITFGGL) form a helical membrane-spanning segment. The Cytoplasmic segment spans residues 498-505 (LGEATEGR). Residues 506-526 (ISAIESLFGASLTGIAYSLFA) form a helical membrane-spanning segment. Residues 527-563 (GQPLTILGSTGPVLVFEKILFKFCRDYHLSYLSLRTS) are Extracellular-facing. The chain crosses the membrane as a helical span at residues 564-584 (IGLWTSFLCIVLVATDASSLV). At 585 to 593 (CYITRFTEE) the chain is on the cytoplasmic side. Residues 594–614 (AFAALICIIFIYEALEKLFHL) form a helical membrane-spanning segment. The Extracellular portion of the chain corresponds to 615-685 (GEIYAFNMHN…MFVGSACGPH (71 aa)). An intrachain disulfide couples Cys-634 to Cys-636. N-linked (GlcNAc...) asparagine glycans are attached at residues Asn-644, Asn-654, and Asn-664. Cys-670 and Cys-682 are disulfide-bonded. Residues 686–706 (GPYVPDVLFWCVVLFFTTFFL) form a helical membrane-spanning segment. Residues 707-729 (SSFLKQFKTKGYFPTKVRSTISD) are Cytoplasmic-facing. Residues 730–750 (FAVFLTIVIMVAIDYLVGIPS) form a helical membrane-spanning segment. Residues 751 to 776 (PKLHVPEKFEPTDPSRGWIISPLGDN) lie on the Extracellular side of the membrane. Residues 777 to 797 (PWWTLLIAAVPALLCTILIFM) form a helical membrane-spanning segment. The Cytoplasmic portion of the chain corresponds to 798 to 812 (DQQITAVIINRKEHK). A helical membrane pass occupies residues 813 to 833 (LKFIPMPVLYGVFLYMGVSSL). The essential for cell membrane localization and transport activity stretch occupies residues 815 to 915 (FIPMPVLYGV…MDLCFTKREL (101 aa)). Topologically, residues 834–876 (KGIQFFDRIKLFGMPAKHQPDLIYLRYVPLWKVHVFTVVQLTC) are extracellular. The helical transmembrane segment at 877-897 (LVLLWVIKASAAAVVFPMMVL) threads the bilayer. Topologically, residues 898-1034 (ALVFVRKLMD…KKYMDAETSL (137 aa)) are cytoplasmic. Positions 918–920 (LDD) are CA2-binding. The interval 926 to 946 (KKKKEDDKKKKEKEEAERMLQ) is disordered. A Phosphothreonine modification is found at Thr-951. A phosphoserine mark is found at Ser-960 and Ser-1033. The PDZ-binding motif lies at 1031-1034 (ETSL).

Belongs to the anion exchanger (TC 2.A.31) family. Forms a complex with ATP6V1B1 and NHERF1/EBP50. Interacts in a pH dependent-manner with CA2/carbonic anhydrase 2. Interacts with CFTR through NHERF1/EBP50. Interacts with USH1C. Expressed in the spiral ligament throughout the cochlea and in photoreceptors of the outer plexiform layer of the retina (at protein level).

Its subcellular location is the basolateral cell membrane. It is found in the apical cell membrane. The protein resides in the cell projection. It localises to the stereocilium. The protein localises to the cell membrane. The enzyme catalyses hydrogencarbonate(in) + Na(+)(in) = hydrogencarbonate(out) + Na(+)(out). Its activity is regulated as follows. Activity is inhibited by 4,4'-di-isothiocyanatostilbene-2,2'-disulfonic acid (DIDS - an inhibitor of several anion channels and transporters). Its function is as follows. Electroneutral sodium- and bicarbonate-dependent cotransporter with a Na(+):HCO3(-) 1:1 stoichiometry. Mediates the sodium-dependent bicarbonate transport important for pH recovery after acid load as well as for regulation of steady-state pH in the duodenum and vascular smooth muscle cells. Plays a key role in macrophage acidification, mediating bicarbonate import into the cytoplasm which is crucial for net acid extrusion and maintenance of cytoplasmic pH during phagocytosis. Provides cellular bicarbonate for de novo purine and pyrimidine synthesis and is a key mediator of de novo nucleotide synthesis downstream of mTORC1 signaling in proliferating cells. May be involved in maintaining locomotor activity, exploratory behavior, and hearing. This is Sodium bicarbonate cotransporter 3 (Slc4a7) from Mus musculus (Mouse).